The chain runs to 44 residues: uncharacterized protein (44 aa).

The disordered stretch occupies residues 22 to 44 (LNSAPAFKSSQNTSTQAKPTFSN).

This is an uncharacterized protein from Dictyostelium discoideum (Social amoeba).